The primary structure comprises 558 residues: Arginine--tRNA ligase (558 aa).

The 'HIGH' region motif lies at 119–129; that stretch reads ANPNGPLHVGH.

Belongs to the class-I aminoacyl-tRNA synthetase family.

Its subcellular location is the cytoplasm. It carries out the reaction tRNA(Arg) + L-arginine + ATP = L-arginyl-tRNA(Arg) + AMP + diphosphate. The sequence is that of Arginine--tRNA ligase from Methanoregula boonei (strain DSM 21154 / JCM 14090 / 6A8).